Here is a 274-residue protein sequence, read N- to C-terminus: Hematopoietically-expressed homeobox protein hhex (274 aa).

The homeobox DNA-binding region spans 139 to 198 (RKGGQVRFSNDQTIELEKKFETQKYLSPPERKRLAKMLQLSERQVKTWFQNRRAKWRRLK). The disordered stretch occupies residues 197-274 (LKQENPQGNK…GDKGFYNCAH (78 aa)). The segment covering 237 to 248 (DEPTSSPTSQET) has biased composition (polar residues). Acidic residues predominate over residues 249–263 (LDSEVSDDSDQEVDI).

As to expression, expressed in the most dorsoanterior endomesoderm of the blastula and gastrula embryo, and later is restricted to the forming liver diverticulum.

It is found in the nucleus. In terms of biological role, recognizes the DNA sequence 5'-ATTAA-3'. Transcriptional repressor. Regulates the differentiation of both endothelial and blood cells. Probably plays a role in the proliferation of vascular endothelial cells during blood vessel development. Establishes anterior identity at two levels; acts early to enhance canonical wnt-signaling by repressing expression of tle4, and acts later to inhibit nodal-signaling by directly targeting nodal/nr1 and nodal2/nr2. May play a role in liver development. Induces heart development. The polypeptide is Hematopoietically-expressed homeobox protein hhex (Xenopus tropicalis (Western clawed frog)).